A 198-amino-acid chain; its full sequence is MSLSIDVTGLPSISSSVYKNESSSTTSTISGKSIGRSEQYISPDAEAFRKYMLSKSPEDIGPSDSASNDPLTSFSIRSNAVKTNADAGVSMDSSAQSRPSSDIGYDQMDFSLNKGIKFDATVDSSISISTTSKKEKSKNKNKYKKCYPKIEAESDSDDYILDDSDSDDGKCKNCKYKKKYFALRLRMKQVAMQLIKDL.

3 disordered regions span residues 13–37, 52–72, and 86–106; these read ISSS…IGRS, MLSK…DPLT, and DAGV…IGYD. The span at 22–37 shows a compositional bias: low complexity; it reads SSSTTSTISGKSIGRS. Position 67 is a phosphoserine; by host CK1 (Ser67). A compositionally biased stretch (polar residues) spans 91 to 100; the sequence is MDSSAQSRPS. Position 92 (Asp92) interacts with Mg(2+). A phosphoserine; by host mark is found at Ser154, Ser156, Ser164, and Ser166.

It belongs to the rotavirus NSP5 family. In terms of assembly, homodimer. Interacts with VP1. Interacts with VP2. Interacts with NSP2; this interaction leads to up-regulation of NSP5 hyperphosphorylation and formation of virus factories. Interacts with NSP6. Participates in the selective exclusion of host proteins from stress granules (SG) and P bodies (PB). Also participates in the sequestration of these remodeled organelles in viral factories. Mg(2+) serves as cofactor. In terms of processing, O-glycosylated. Hyperphosphorylated on serine residues, when in dimeric form. Phosphorylation by host CK1 is required for the hyperphosphorylation of NSP5 dimer.

It localises to the host cytoplasm. Functionally, plays an essential role in the viral genome replication. Participates, together with NSP2, in the formation of viral factories (viroplasms), which are large inclusions in the host cytoplasm where replication intermediates are assembled and viral RNA replication takes place. Orchestrates the recruitment of viroplasmic proteins such as capsid proteins to these factories. Participates in the selective exclusion of host proteins from stress granules (SG) and P bodies (PB). Also participates in the sequestration of these remodeled organelles in viral factories. The protein is Non-structural protein 5 of Homo sapiens (Human).